Reading from the N-terminus, the 692-residue chain is Glycine--tRNA ligase beta subunit (692 aa).

The protein belongs to the class-II aminoacyl-tRNA synthetase family. As to quaternary structure, tetramer of two alpha and two beta subunits.

Its subcellular location is the cytoplasm. The catalysed reaction is tRNA(Gly) + glycine + ATP = glycyl-tRNA(Gly) + AMP + diphosphate. The chain is Glycine--tRNA ligase beta subunit from Alteromonas mediterranea (strain DSM 17117 / CIP 110805 / LMG 28347 / Deep ecotype).